We begin with the raw amino-acid sequence, 803 residues long: Integrin beta-1 (803 aa).

A signal peptide spans 1-24 (MAETNLTLLTWAGILCCLIWSGSA). At glutamine 25 the chain carries Blocked amino end (Gln). Over 25 to 733 (QQGGSDCIKA…ETPECPSGPD (709 aa)) the chain is Extracellular. One can recognise a PSI domain in the interval 30–80 (DCIKANAKSCGECIQAGPNCGWCKKTDFLQEGEPTSARCDDLAALKSKGCP). 22 disulfide bridges follow: cysteine 31–cysteine 49, cysteine 39–cysteine 469, cysteine 42–cysteine 68, cysteine 52–cysteine 79, cysteine 211–cysteine 217, cysteine 265–cysteine 305, cysteine 405–cysteine 419, cysteine 439–cysteine 467, cysteine 471–cysteine 491, cysteine 482–cysteine 494, cysteine 496–cysteine 505, cysteine 507–cysteine 538, cysteine 521–cysteine 536, cysteine 530–cysteine 541, cysteine 543–cysteine 558, cysteine 560–cysteine 581, cysteine 565–cysteine 579, cysteine 573–cysteine 584, cysteine 586–cysteine 595, cysteine 597–cysteine 620, cysteine 604–cysteine 618, and cysteine 612–cysteine 623. The region spanning 144–382 (DYPIDLYYLM…QLIIDAYNSL (239 aa)) is the VWFA domain. Residues serine 156 and serine 158 each coordinate Mg(2+). Serine 158, aspartate 161, aspartate 162, and glutamate 193 together coordinate Ca(2+). The interval 211-217 (CTGDQNC) is CX3CL1-binding. N-linked (GlcNAc...) asparagine glycosylation occurs at asparagine 216. Residues asparagine 248, aspartate 250, proline 252, and glutamate 253 each contribute to the Ca(2+) site. Glutamate 253 contacts Mg(2+). A glycan (N-linked (GlcNAc...) asparagine) is linked at asparagine 273. Residues 299 to 318 (LPNDGKCHLENNMYTMSHYY) are CX3CL1-binding. 6 N-linked (GlcNAc...) asparagine glycosylation sites follow: asparagine 367, asparagine 410, asparagine 421, asparagine 433, asparagine 445, and asparagine 486. Positions 387–470 (ILENSKLPKE…IHLQFICDCL (84 aa)) are interaction with TMEM182. 4 I-EGF domains span residues 471-506 (CQSE…RLCE), 507-559 (CSTD…KYCE), 560-596 (CDNF…SACD), and 597-636 (CSLD…PTCE). Asparagine 525 carries an N-linked (GlcNAc...) asparagine glycan. A glycan (N-linked (GlcNAc...) asparagine) is linked at asparagine 589. N-linked (GlcNAc...) asparagine glycosylation is present at asparagine 624. 6 disulfide bridges follow: cysteine 625–cysteine 635, cysteine 638–cysteine 641, cysteine 645–cysteine 696, cysteine 651–cysteine 670, cysteine 654–cysteine 666, and cysteine 704–cysteine 728. A glycan (N-linked (GlcNAc...) asparagine) is linked at asparagine 674. Residues 734–756 (IIPIVAGVVAGIVLIGLALLLIW) traverse the membrane as a helical segment. Topologically, residues 757–803 (KLLMIIHDRREFAKFEKEKMNAKWDTGENPIYKSAVTTVVNPKYEGK) are cytoplasmic. A Phosphotyrosine; by Tyr-kinases modification is found at tyrosine 788.

Belongs to the integrin beta chain family. In terms of assembly, heterodimer of an alpha and a beta subunit. Beta-1 associates with either alpha-1, alpha-2, alpha-3, alpha-4, alpha-5, alpha-6, alpha-7, alpha-8, alpha-9, alpha-10, alpha-11 or alpha-V. Interacts with TMEM182 and LAMB1. In terms of tissue distribution, expressed on surface of embryonic fibroblasts (at protein level).

The protein localises to the cell membrane. It is found in the cell projection. The protein resides in the invadopodium membrane. It localises to the ruffle membrane. Its subcellular location is the melanosome. The protein localises to the lamellipodium. It is found in the ruffle. The protein resides in the cell junction. It localises to the focal adhesion. Its function is as follows. Integrins alpha-1/beta-1, alpha-2/beta-1, alpha-10/beta-1 and alpha-11/beta-1 are receptors for collagen. Integrins alpha-1/beta-1 and alpha-2/beta-1 recognize the proline-hydroxylated sequence G-F-P-G-E-R in collagen. Integrins alpha-2/beta-1, alpha-3/beta-1, alpha-4/beta-1, alpha-5/beta-1, alpha-8/beta-1, alpha-10/beta-1, alpha-11/beta-1 and alpha-V/beta-1 are receptors for fibronectin. Alpha-4/beta-1 recognizes one or more domains within the alternatively spliced CS-1 and CS-5 regions of fibronectin. Integrin alpha-5/beta-1 is a receptor for fibrinogen. Integrin alpha-1/beta-1, alpha-2/beta-1, alpha-6/beta-1 and alpha-7/beta-1 are receptors for lamimin. Integrin alpha-6/beta-1 (ITGA6:ITGB1) is present in oocytes and is involved in sperm-egg fusion. Integrin alpha-4/beta-1 is a receptor for VCAM1 and recognizes the sequence Q-I-D-S in VCAM1. Integrin alpha-9/beta-1 is a receptor for VCAM1, cytotactin and osteopontin. It recognizes the sequence A-E-I-D-G-I-E-L in cytotactin. Integrin alpha-3/beta-1 is a receptor for epiligrin, thrombospondin and CSPG4. Integrin alpha-3/beta-1 provides a docking site for FAP (seprase) at invadopodia plasma membranes in a collagen-dependent manner and hence may participate in the adhesion, formation of invadopodia and matrix degradation processes, promoting cell invasion. Alpha-3/beta-1 may mediate with LGALS3 the stimulation by CSPG4 of endothelial cells migration. Integrin alpha-V/beta-1 is a receptor for vitronectin. Beta-1 integrins recognize the sequence R-G-D in a wide array of ligands. When associated with alpha-7/beta-1 integrin, regulates cell adhesion and laminin matrix deposition. Involved in promoting endothelial cell motility and angiogenesis. Involved in osteoblast compaction through the fibronectin fibrillogenesis cell-mediated matrix assembly process and the formation of mineralized bone nodules. May be involved in up-regulation of the activity of kinases such as PKC via binding to KRT1. Together with KRT1 and RACK1, serves as a platform for SRC activation or inactivation. ITGA4:ITGB1 binds to fractalkine (CX3CL1) and may act as its coreceptor in CX3CR1-dependent fractalkine signaling. ITGA4:ITGB1 and ITGA5:ITGB1 bind to PLA2G2A via a site (site 2) which is distinct from the classical ligand-binding site (site 1) and this induces integrin conformational changes and enhanced ligand binding to site 1. ITGA5:ITGB1 acts as a receptor for fibrillin-1 (FBN1) and mediates R-G-D-dependent cell adhesion to FBN1. ITGA5:ITGB1 acts as a receptor for fibronectin FN1 and mediates R-G-D-dependent cell adhesion to FN1. ITGA5:ITGB1 is a receptor for IL1B and binding is essential for IL1B signaling. ITGA5:ITGB3 is a receptor for soluble CD40LG and is required for CD40/CD40LG signaling. Plays an important role in myoblast differentiation and fusion during skeletal myogenesis. This chain is Integrin beta-1 (ITGB1), found in Gallus gallus (Chicken).